A 155-amino-acid chain; its full sequence is Ribosomal RNA large subunit methyltransferase H (155 aa).

S-adenosyl-L-methionine is bound by residues leucine 73, glycine 104, and 123-128 (LSPLTL).

This sequence belongs to the RNA methyltransferase RlmH family. As to quaternary structure, homodimer.

The protein localises to the cytoplasm. The enzyme catalyses pseudouridine(1915) in 23S rRNA + S-adenosyl-L-methionine = N(3)-methylpseudouridine(1915) in 23S rRNA + S-adenosyl-L-homocysteine + H(+). Specifically methylates the pseudouridine at position 1915 (m3Psi1915) in 23S rRNA. The polypeptide is Ribosomal RNA large subunit methyltransferase H (Pseudomonas putida (strain W619)).